We begin with the raw amino-acid sequence, 534 residues long: ATP synthase subunit beta 2 (534 aa).

Over residues 1-10 the composition is skewed to polar residues; sequence MADPQATNGT. Residues 1–30 form a disordered region; it reads MADPQATNGTGAACAERDASDVGDVSDVGD. Residue 185 to 192 coordinates ATP; the sequence is GGAGVGKT. Over residues 494–505 the composition is skewed to basic and acidic residues; it reads AAAREADARREA. Residues 494-534 form a disordered region; it reads AAAREADARREAAAAASGAGPGTTSDPASGSAEPQGARHGR.

It belongs to the ATPase alpha/beta chains family. As to quaternary structure, F-type ATPases have 2 components, CF(1) - the catalytic core - and CF(0) - the membrane proton channel. CF(1) has five subunits: alpha(3), beta(3), gamma(1), delta(1), epsilon(1). CF(0) has three main subunits: a(1), b(2) and c(9-12). The alpha and beta chains form an alternating ring which encloses part of the gamma chain. CF(1) is attached to CF(0) by a central stalk formed by the gamma and epsilon chains, while a peripheral stalk is formed by the delta and b chains.

The protein localises to the cell inner membrane. The enzyme catalyses ATP + H2O + 4 H(+)(in) = ADP + phosphate + 5 H(+)(out). Produces ATP from ADP in the presence of a proton gradient across the membrane. The catalytic sites are hosted primarily by the beta subunits. This Burkholderia pseudomallei (strain 668) protein is ATP synthase subunit beta 2.